Reading from the N-terminus, the 296-residue chain is MTKKQLHLVIVTGMSGAGKTVAIQSFEDLGCFTIDNMPPALLPKFLQLVEIKEDNPKLALVVDMRSRSFFSEIQAVLDELENQDGLDFKILFLDAADKELVARYKETRRSHPLAADGRILDGIKLERELLAPLKNMSQNVVDTTELTPRELRKTLAEQFSDQEQAQSFRIEVMSFGFKYGIPIDADLVFDVRFLPNPYYLPELRNQTGVDEPVYDYVMNHPESEDFYQHLLALIEPILPSYQKEGKSVLTIAMGCTGGQHRSVAFAKRLVQDLSKNWSVNEGHRDKDRRKETVNRS.

Residue Gly-13 to Thr-20 participates in ATP binding. GTP is bound at residue Asp-63–Ser-66.

It belongs to the RapZ-like family.

Its function is as follows. Displays ATPase and GTPase activities. This is Nucleotide-binding protein SPJ_1472 from Streptococcus pneumoniae (strain JJA).